A 1458-amino-acid polypeptide reads, in one-letter code: Phospholipase B1, membrane-associated (1458 aa).

Positions 1-21 are cleaved as a signal peptide; sequence MGLRPGIFLLELLLLLGQGTP. Over 22-1417 the chain is Extracellular; the sequence is QIHTSPRKST…QAEEAPEVLY (1396 aa). Tandem repeats lie at residues 39–347, 362–707, and 708–1054. The segment at 39 to 1402 is 4 X 308-326 AA approximate repeats; the sequence is ETLKNSPFPC…SPYLYTLRNS (1364 aa). N-linked (GlcNAc...) asparagine glycans are attached at residues N173 and N240. Residue S400 is part of the active site. N493 carries an N-linked (GlcNAc...) asparagine glycan. The active site involves D514. N-linked (GlcNAc...) asparagine glycans are attached at residues N529 and N590. Residue H655 is part of the active site. N690, N783, N797, N809, N1055, N1113, N1275, and N1378 each carry an N-linked (GlcNAc...) asparagine glycan. Copy 4 of the repeat occupies 1064–1402; sequence IENWGSDFLC…SPYLYTLRNS (339 aa). Positions 1403–1445 are necessary for membrane localization; the sequence is RLLPDQAEEAPEVLYWAVPVAAGVGLVVGIIGTVVWRCRRGGR. The chain crosses the membrane as a helical span at residues 1418–1438; it reads WAVPVAAGVGLVVGIIGTVVW. Residues 1439 to 1458 are Cytoplasmic-facing; the sequence is RCRRGGRREDPPMSLRTVAL.

The protein belongs to the 'GDSL' lipolytic enzyme family. Phospholipase B1 subfamily. Post-translationally, undergoes proteolytic cleavage in the ileum. Expressed in the epidermis (at protein level).

It localises to the apical cell membrane. The enzyme catalyses a 1,2-diacyl-sn-glycero-3-phosphocholine + H2O = a 1-acyl-sn-glycero-3-phosphocholine + a fatty acid + H(+). It carries out the reaction a 1-O-alkyl-2-acyl-sn-glycero-3-phosphocholine + H2O = a 1-O-alkyl-sn-glycero-3-phosphocholine + a fatty acid + H(+). It catalyses the reaction a 1-acyl-sn-glycero-3-phosphocholine + H2O = sn-glycerol 3-phosphocholine + a fatty acid + H(+). The catalysed reaction is a triacylglycerol + H2O = a diacylglycerol + a fatty acid + H(+). The enzyme catalyses 1,2-dihexadecanoyl-sn-glycero-3-phosphocholine + H2O = 1-hexadecanoyl-sn-glycero-3-phosphocholine + hexadecanoate + H(+). It carries out the reaction 1-hexadecanoyl-2-(9Z-octadecenoyl)-sn-glycero-3-phosphocholine + H2O = 1-hexadecanoyl-sn-glycero-3-phosphocholine + (9Z)-octadecenoate + H(+). It catalyses the reaction 1,2-di-(9Z-octadecenoyl)-sn-glycero-3-phosphocholine + H2O = 1-(9Z-octadecenoyl)-sn-glycero-3-phosphocholine + (9Z)-octadecenoate + H(+). The catalysed reaction is 1-hexadecanoyl-2-(9Z,12Z-octadecadienoyl)-sn-glycero-3-phosphocholine + H2O = (9Z,12Z)-octadecadienoate + 1-hexadecanoyl-sn-glycero-3-phosphocholine + H(+). The enzyme catalyses 1-hexadecanoyl-2-(9Z,12Z-octadecadienoyl)-sn-glycero-3-phosphocholine + H2O = 2-(9Z,12Z-octadecadienoyl)-sn-glycero-3-phosphocholine + hexadecanoate + H(+). It carries out the reaction 1-hexadecanoyl-2-(9Z-octadecenoyl)-sn-glycero-3-phosphoethanolamine + H2O = 1-hexadecanoyl-sn-glycero-3-phosphoethanolamine + (9Z)-octadecenoate + H(+). It catalyses the reaction 1-hexadecanoyl-2-(9Z-octadecenoyl)-sn-glycero-3-phospho-(1'-sn-glycerol) + H2O = 1-hexadecanoyl-sn-glycero-3-phospho-(1'-sn-glycerol) + (9Z)-octadecenoate + H(+). The catalysed reaction is 1,2-dihexadecanoyl-sn-glycero-3-phosphocholine + 2 H2O = sn-glycerol 3-phosphocholine + 2 hexadecanoate + 2 H(+). The enzyme catalyses 1-O-hexadecyl-2-(9Z)-octadecenoyl-sn-glycero-3-phosphocholine + H2O = 1-O-hexadecyl-sn-glycero-3-phosphocholine + (9Z)-octadecenoate + H(+). It carries out the reaction 1-hexadecanoyl-sn-glycero-3-phosphocholine + H2O = sn-glycerol 3-phosphocholine + hexadecanoate + H(+). It catalyses the reaction 1,2,3-tri-(9Z-octadecenoyl)-glycerol + H2O = di-(9Z)-octadecenoylglycerol + (9Z)-octadecenoate + H(+). The catalysed reaction is 1-hexadecanoyl-2-(9Z)-octadecenoyl-3-octadecanoyl-sn-glycerol + H2O = 1-hexadecanoyl-2-(9Z-octadecenoyl)-sn-glycerol + octadecanoate + H(+). The enzyme catalyses 1,3-dihexadecanoyl-2-(9Z-octadecenoyl)glycerol + H2O = 1,3-dihexadecanoylglycerol + (9Z)-octadecenoate + H(+). It carries out the reaction 1,3-dihexadecanoyl-2-(9Z-octadecenoyl)glycerol + H2O = 1-hexadecanoyl-2-(9Z-octadecenoyl)-glycerol + hexadecanoate + H(+). It catalyses the reaction 1-hexadecanoyl-2-(9Z)-octadecenoyl-3-octadecanoyl-sn-glycerol + H2O = 1-hexadecanoyl-3-octadecanoyl-sn-glycerol + (9Z)-octadecenoate + H(+). The catalysed reaction is 1-hexadecanoyl-2-(9Z)-octadecenoyl-3-octadecanoyl-sn-glycerol + H2O = 2-(9Z-octadecenoyl)-3-octadecanoyl-sn-glycerol + hexadecanoate + H(+). The enzyme catalyses 1-octadecanoyl-2-(9Z,12Z)-octadecadienoyl-sn-glycerol + H2O = 1-octadecanoyl-sn-glycerol + (9Z,12Z)-octadecadienoate + H(+). It carries out the reaction 1,2-di-(9Z-octadecenoyl)-sn-glycerol + H2O = 1-(9Z-octadecenoyl)-sn-glycerol + (9Z)-octadecenoate + H(+). It catalyses the reaction 2,3-di-(9Z)-octadecenoyl-sn-glycerol + H2O = 3-(9Z-octadecenoyl)-sn-glycerol + (9Z)-octadecenoate + H(+). The catalysed reaction is 1,3-di-(9Z-octadecenoyl)-glycerol + H2O = 1-(9Z-octadecenoyl)-glycerol + (9Z)-octadecenoate + H(+). The enzyme catalyses 1-(9Z-octadecenoyl)-glycerol + H2O = glycerol + (9Z)-octadecenoate + H(+). It carries out the reaction 2-(9Z-octadecenoyl)-glycerol + H2O = glycerol + (9Z)-octadecenoate + H(+). In terms of biological role, calcium-independent membrane-associated phospholipase that catalyzes complete diacylation of phospholipids by hydrolyzing both sn-1 and sn-2 fatty acyl chains attached to the glycerol backbone (phospholipase B activity). Has dual phospholipase and lysophospholipase activities toward diacylphospholipids. Preferentially cleaves sn-2 ester bonds over sn-1 bonds. Acts as a lipase toward glycerolipid substrates. Hydrolyzes fatty acyl chains of diacylglycerols with preference for the sn-2 position and of triacylglycerols with not positional selectivity. May also hydrolyze long chain retinyl esters such as retinyl palmitate. May contribute to digestion of dietary phospholipids, glycerolipids and retinoids, facilitating lipid absorption at the brush border. The protein is Phospholipase B1, membrane-associated (PLB1) of Homo sapiens (Human).